A 441-amino-acid chain; its full sequence is Trigger factor (441 aa).

The 86-residue stretch at 163-248 (GDQVVFDFVG…IKEVKKPVPA (86 aa)) folds into the PPIase FKBP-type domain.

It belongs to the FKBP-type PPIase family. Tig subfamily.

The protein localises to the cytoplasm. It carries out the reaction [protein]-peptidylproline (omega=180) = [protein]-peptidylproline (omega=0). Involved in protein export. Acts as a chaperone by maintaining the newly synthesized protein in an open conformation. Functions as a peptidyl-prolyl cis-trans isomerase. The polypeptide is Trigger factor (Jannaschia sp. (strain CCS1)).